Here is an 870-residue protein sequence, read N- to C-terminus: Breast cancer anti-estrogen resistance protein 1 (870 aa).

Residue Met1 is modified to N-acetylmethionine. Residues 3 to 65 (HLNVLAKALY…PGNRLKILVG (63 aa)) enclose the SH3 domain. The disordered stretch occupies residues 70 to 156 (KPAGPGPGPP…TFSKQTPHHP (87 aa)). Residues 73–85 (GPGPGPPATPAQP) show a composition bias toward pro residues. Polar residues predominate over residues 97 to 111 (SQYTPMLPNTYQPQP). Residues 115-416 (YLVPTPSKAQ…SGVYAVPPPA (302 aa)) form a substrate for kinases region. Tyr128 carries the phosphotyrosine; by SRC modification. Phosphoserine occurs at positions 134 and 139. Residues 135 to 151 (PQFQSPPAKQTSTFSKQ) are compositionally biased toward polar residues. Tyr234 is subject to Phosphotyrosine. At Tyr249 the chain carries Phosphotyrosine; by ABL1. Phosphothreonine is present on Thr269. Ser292 bears the Phosphoserine mark. Phosphotyrosine is present on residues Tyr362, Tyr372, and Tyr410. 3 disordered regions span residues 411-449 (AVPP…VAGP), 609-658 (KATA…NSEG), and 715-734 (IDHD…GRTG). Residues 416–426 (AEREAPAEGKR) show a composition bias toward basic and acidic residues. A compositionally biased stretch (low complexity) spans 427 to 444 (LSASSTGSTRSSQSASSL). A phosphoserine mark is found at Ser428, Ser437, and Ser639. The span at 626-655 (TDKTSSIQSRPLPSPPKFTSQDSPDGQYEN) shows a compositional bias: polar residues. The SH3-binding signature appears at 635 to 643 (RPLPSPPKF). The tract at residues 746–796 (FYLEQCEANLTTLTNAVDAFFTAVATNQPPKIFVAHSKFVILSAHKLVFIG) is divergent helix-loop-helix motif.

It belongs to the CAS family. As to quaternary structure, forms complexes in vivo with PTK2/FAK1, adapter protein CRKL and LYN kinase. Heterodimerizes with NEDD9. Component of a complex comprised of SH2D3C, BCAR1/CAS, and CRK. Within the complex, interacts with SH2D3C (via C-terminus), and CRK. Part of a complex comprised of PTPRA, BCAR1, BCAR3 (via SH2 domain) and SRC; the formation of the complex is dependent on integrin mediated-tyrosine phosphorylation of PTPRA. Interacts with BCAR3 (via Ras-GEF domain); the interaction regulates adhesion-dependent serine phosphorylation. Interacts with SMAD2 and SMAD3. Interacts with NPHP1. Interacts with PTK2B/PYK2. Interacts (via C-terminus) with SH2D3C/CHAT isoform 2 (via C-terminus). Interacts with activated CSPG4. Interacts with BMX, INPPL1/SHIP2 and PEAK1. Part of a collagen-stimulated complex involved in cell migration made of CDC42, CRK, TNK2 and BCAR1/p130cas. Interacts with TNK2 via SH3 domains. Interacts (when tyrosine-phosphorylated) with tensin TNS1; the interaction is increased by phosphorylation of TNS1. In terms of processing, PTK2/FAK1 activation mediates phosphorylation at the YDYVHL motif; phosphorylation is most likely catalyzed by SRC family members. SRC-family kinases are recruited to the phosphorylated sites and can phosphorylate other tyrosine residues. Tyrosine phosphorylation is triggered by integrin-mediated adhesion of cells to the extracellular matrix. Dephosphorylated by PTPN14 at Tyr-128. Post-translationally, phosphorylated by SRC kinase in a EDN1- and PTK2B-mediated manner; phosphorylation strengthens its interaction with BCAR3 as part of the PTK2B/BCAR1/BCAR3/RAP1 signaling pathway. As to expression, expressed in B-cells (at protein level). Widely expressed with an abundant expression in the testis. Low level of expression seen in the liver, thymus, and peripheral blood leukocytes.

The protein resides in the cell junction. It localises to the focal adhesion. Its subcellular location is the cytoplasm. The protein localises to the cell projection. It is found in the axon. Docking protein which plays a central coordinating role for tyrosine kinase-based signaling related to cell adhesion. Implicated in induction of cell migration and cell branching. Involved in the BCAR3-mediated inhibition of TGFB signaling. The protein is Breast cancer anti-estrogen resistance protein 1 (BCAR1) of Homo sapiens (Human).